The chain runs to 282 residues: MNTVLGALNPIALRLGPIQVHWYGVIIASAVVIAVALAVREGQRRGVRPDDIYDMILWALPFTLIAARTYYVIFQWSYYRQNPGEIIRIWDGGIAIYGGLIGAGIVVILFCRSRFIPTWLMLDIAAPTVIMGQGIGRWGNFMNQEAFGRVTSLSFLQGLHLPDWLINQMYIRGAYRQPTFLYESVWDLLGFALLMLTRHRTHWYKQGDVFLTYVAWYAFGRFFTEGMRTDSLMLFNVIRVSQALSVVLFFGSIGLMIWRRHHNPNNRWYLAGSGQKVVAENK.

A run of 3 helical transmembrane segments spans residues 18 to 38 (IQVHWYGVIIASAVVIAVALA), 56 to 76 (ILWALPFTLIAARTYYVIFQW), and 89 to 109 (IWDGGIAIYGGLIGAGIVVIL). A 1,2-diacyl-sn-glycero-3-phospho-(1'-sn-glycerol) is bound at residue Arg137. The helical transmembrane segment at 237–257 (VIRVSQALSVVLFFGSIGLMI) threads the bilayer.

Belongs to the Lgt family.

The protein localises to the cell membrane. It catalyses the reaction L-cysteinyl-[prolipoprotein] + a 1,2-diacyl-sn-glycero-3-phospho-(1'-sn-glycerol) = an S-1,2-diacyl-sn-glyceryl-L-cysteinyl-[prolipoprotein] + sn-glycerol 1-phosphate + H(+). Its pathway is protein modification; lipoprotein biosynthesis (diacylglyceryl transfer). Its function is as follows. Catalyzes the transfer of the diacylglyceryl group from phosphatidylglycerol to the sulfhydryl group of the N-terminal cysteine of a prolipoprotein, the first step in the formation of mature lipoproteins. The sequence is that of Phosphatidylglycerol--prolipoprotein diacylglyceryl transferase from Lactiplantibacillus plantarum (strain ATCC BAA-793 / NCIMB 8826 / WCFS1) (Lactobacillus plantarum).